The sequence spans 263 residues: Indole-3-glycerol phosphate synthase (263 aa).

The protein belongs to the TrpC family.

The enzyme catalyses 1-(2-carboxyphenylamino)-1-deoxy-D-ribulose 5-phosphate + H(+) = (1S,2R)-1-C-(indol-3-yl)glycerol 3-phosphate + CO2 + H2O. It participates in amino-acid biosynthesis; L-tryptophan biosynthesis; L-tryptophan from chorismate: step 4/5. The polypeptide is Indole-3-glycerol phosphate synthase (Polaromonas naphthalenivorans (strain CJ2)).